The primary structure comprises 115 residues: uncharacterized protein (115 aa).

The disordered stretch occupies residues 1 to 115 (MGETWFLTPN…ARSPERTPSP (115 aa)). Positions 7–17 (LTPNGQSSPGS) are enriched in polar residues. Composition is skewed to low complexity over residues 60 to 70 (ASCAPRATPRR) and 91 to 107 (SASA…WPAR).

This is an uncharacterized protein from Human adenovirus C serotype 2 (HAdV-2).